A 234-amino-acid chain; its full sequence is UPF0758 protein STH371 (234 aa).

Positions 110-232 (DLCNPRAVFE…YTSFRERGLL (123 aa)) constitute an MPN domain. Zn(2+) contacts are provided by H181, H183, and D194. The JAMM motif signature appears at 181–194 (HNHPSGDPTPSRED).

It belongs to the UPF0758 family.

This Symbiobacterium thermophilum (strain DSM 24528 / JCM 14929 / IAM 14863 / T) protein is UPF0758 protein STH371.